A 273-amino-acid chain; its full sequence is Phosphatidylglycerol--prolipoprotein diacylglyceryl transferase (273 aa).

The next 4 helical transmembrane spans lie at I18–G38, L47–A67, I89–I109, and V116–G136. Residue R137 participates in a 1,2-diacyl-sn-glycero-3-phospho-(1'-sn-glycerol) binding. A run of 3 helical transmembrane segments spans residues V178–I198, G207–M227, and L238–Y258.

The protein belongs to the Lgt family.

The protein localises to the cell membrane. It carries out the reaction L-cysteinyl-[prolipoprotein] + a 1,2-diacyl-sn-glycero-3-phospho-(1'-sn-glycerol) = an S-1,2-diacyl-sn-glyceryl-L-cysteinyl-[prolipoprotein] + sn-glycerol 1-phosphate + H(+). It participates in protein modification; lipoprotein biosynthesis (diacylglyceryl transfer). Catalyzes the transfer of the diacylglyceryl group from phosphatidylglycerol to the sulfhydryl group of the N-terminal cysteine of a prolipoprotein, the first step in the formation of mature lipoproteins. This Lysinibacillus sphaericus (strain C3-41) protein is Phosphatidylglycerol--prolipoprotein diacylglyceryl transferase.